We begin with the raw amino-acid sequence, 202 residues long: Ribonuclease HII (202 aa).

In terms of domain architecture, RNase H type-2 spans 13 to 202 (KIEAGLDEAG…HFKPKQLDLF (190 aa)). The a divalent metal cation site is built by D19, E20, and D112.

Belongs to the RNase HII family. Requires Mn(2+) as cofactor. Mg(2+) is required as a cofactor.

The protein localises to the cytoplasm. It catalyses the reaction Endonucleolytic cleavage to 5'-phosphomonoester.. Endonuclease that specifically degrades the RNA of RNA-DNA hybrids. This is Ribonuclease HII from Cytophaga hutchinsonii (strain ATCC 33406 / DSM 1761 / CIP 103989 / NBRC 15051 / NCIMB 9469 / D465).